A 493-amino-acid polypeptide reads, in one-letter code: Glycerol kinase (493 aa).

Position 12 (T12) interacts with ADP. The ATP site is built by T12, T13, and S14. T12 provides a ligand contact to sn-glycerol 3-phosphate. R16 serves as a coordination point for ADP. Residues R82, E83, Y132, and D239 each contribute to the sn-glycerol 3-phosphate site. Glycerol-binding residues include R82, E83, Y132, D239, and Q240. Residues T261 and G303 each coordinate ADP. ATP is bound by residues T261, G303, Q307, and G402. 2 residues coordinate ADP: G402 and N406.

The protein belongs to the FGGY kinase family.

It carries out the reaction glycerol + ATP = sn-glycerol 3-phosphate + ADP + H(+). The protein operates within polyol metabolism; glycerol degradation via glycerol kinase pathway; sn-glycerol 3-phosphate from glycerol: step 1/1. Its function is as follows. Key enzyme in the regulation of glycerol uptake and metabolism. Catalyzes the phosphorylation of glycerol to yield sn-glycerol 3-phosphate. In Thermococcus onnurineus (strain NA1), this protein is Glycerol kinase.